A 126-amino-acid chain; its full sequence is UPF0047 protein AF_2050 (126 aa).

It belongs to the UPF0047 family.

The chain is UPF0047 protein AF_2050 from Archaeoglobus fulgidus (strain ATCC 49558 / DSM 4304 / JCM 9628 / NBRC 100126 / VC-16).